Reading from the N-terminus, the 2472-residue chain is Nuclear receptor corepressor 2 (2472 aa).

Disordered regions lie at residues 1–20 (MSGS…PRYP), 47–168 (RDYT…SRLS), and 190–220 (ISKL…PPIE). Arginine 18 bears the Asymmetric dimethylarginine mark. Polar residues predominate over residues 51–60 (SHLSPGSIIQ). A phosphoserine mark is found at serine 54 and serine 67. Basic and acidic residues-rich tracts occupy residues 78-88 (RSQELHLRPES) and 96-112 (GKPD…RLEL). Phosphoserine is present on residues serine 149 and serine 152. A coiled-coil region spans residues 165–207 (SRLSKEELIQNMDRVDREITMVEQQISKLKKKQQQLEEEAAKP). A compositionally biased stretch (basic and acidic residues) spans 203 to 212 (EAAKPPEPEK). Serine 215 is modified (phosphoserine). Residues 254-312 (LPLYNQPSDTRQYHENIKINQAMRKKLILYFKRRNHARKQWEQRFCQRYDQLMEAWEKK) are interaction with SIN3A/B. Residues 389–480 (MRQLAVIPPM…YLTKKNENYK (92 aa)) form a deacetylase activation domain (DAD) region. One can recognise an SANT 1 domain in the interval 427–478 (QVTNMWSEQERDTFREKFMQHPKNFGLIASFLERKTVAECVLYYYLTKKNEN). Lysine 449, tyrosine 470, and tyrosine 471 together coordinate 1D-myo-inositol 1,4,5,6-tetrakisphosphate. Disordered regions lie at residues 487 to 618 (YRRR…EMET), 665 to 1107 (HKLK…RPPI), and 1173 to 1197 (SATS…YRGS). The stretch at 492 to 560 (KSQQQQQQQQ…GEDNDEKEAV (69 aa)) forms a coiled coil. Serine 493 is modified (phosphoserine). Residues 494-507 (QQQQQQQQQQQQQQ) show a composition bias toward low complexity. Residues 512-548 (SQEEKEEKEKEKEADKEEEKQDAENEKEELSKEKTDD) are compositionally biased toward basic and acidic residues. Threonine 549 is subject to Phosphothreonine. A Phosphoserine modification is found at serine 550. Residues 592–609 (ATPQQSSELASMEMNESS) show a composition bias toward polar residues. Residues 606 to 657 (NESSRWTEEEMETAKKGLLEHGRNWSAIARMVGSKTVSQCKNFYFNYKKRQN) enclose the SANT 2 domain. Residues 658-682 (LDEILQQHKLKMEKERNARRKKKKT) are a coiled coil. Residues 709–718 (NEEELAEEAE) show a composition bias toward acidic residues. Positions 739 to 750 (VNNSSDTESVPS) are enriched in polar residues. 2 positions are modified to phosphoserine: serine 747 and serine 750. 2 stretches are compositionally biased toward pro residues: residues 773–782 (TQPPVPPPEE) and 789–811 (EPSP…PAAP). 2 stretches are compositionally biased toward basic and acidic residues: residues 831–850 (EDAK…KPEE) and 859–868 (ESVKSDHKEE). Lysine 878 is subject to N6-acetyllysine. Residues 905 to 919 (GSSSGATQDSDSSAT) are compositionally biased toward low complexity. Residue serine 938 is modified to Phosphoserine. Threonine 945 is modified (phosphothreonine). Serine 955 carries the phosphoserine modification. Position 958 is an N6-acetyllysine (lysine 958). Over residues 978–988 (KVHEPPREDTV) the composition is skewed to basic and acidic residues. Residues 989-1000 (PPKPVPPVPPPT) are compositionally biased toward pro residues. Over residues 1090–1101 (LPLGLHDSARPV) the composition is skewed to low complexity. Residues lysine 1181 and lysine 1209 each carry the N6-acetyllysine modification. Serine 1220 is modified (phosphoserine). 3 disordered regions span residues 1254 to 1277 (SVSQ…AAPK), 1345 to 1378 (LKRE…LKLK), and 1410 to 1443 (PLAP…KHDV). Phosphothreonine is present on threonine 1350. Basic and acidic residues predominate over residues 1359-1368 (DLTETYKPRP). A phosphoserine mark is found at serine 1449, serine 1509, and serine 1565. A disordered region spans residues 1479 to 1578 (KSRSGTSSGA…TVPEHHPHPI (100 aa)). Asymmetric dimethylarginine is present on arginine 1624. Residues 1734–1826 (TAPPPFSSRH…PISPRTQDAL (93 aa)) are disordered. Residues 1740–1753 (SSRHSSSPLSPGGP) show a composition bias toward low complexity. Phosphoserine is present on residues serine 1746 and serine 1749. A compositionally biased stretch (basic and acidic residues) spans 1765 to 1778 (SERERERERERDKS). The span at 1807–1826 (RPASHTHQHSPISPRTQDAL) shows a compositional bias: polar residues. Position 1819 is a phosphoserine (serine 1819). Arginine 1854 carries the post-translational modification Omega-N-methylarginine. 3 disordered regions span residues 1857–1878 (RSTS…THCP), 1898–1986 (KETS…KPFS), and 2001–2078 (AGYS…LQTA). Residues 1899 to 1913 (ETSRVARPERPRVDA) are compositionally biased toward basic and acidic residues. Lysine 1920 carries the post-translational modification N6-acetyllysine. Residues 1925–1938 (EPASSPSKSSEPRS) are compositionally biased toward low complexity. A Phosphoserine modification is found at serine 1963. An N6-acetyllysine modification is found at lysine 1983. A phosphoserine mark is found at serine 2004, serine 2012, serine 2015, serine 2016, and serine 2018. Position 2020 is a phosphothreonine (threonine 2020). Basic and acidic residues predominate over residues 2020-2043 (THDKGLSKPLEELEKSHLEGELRH). Serine 2035 carries the phosphoserine modification. Over residues 2064–2075 (LPESQPSSSPLL) the composition is skewed to low complexity. The segment at 2086 to 2090 (RVVTL) is required for interaction with RARA in the absence of its ligand. The short motif at 2094–2098 (ISEVI) is the CORNR box of ID1 element. A disordered region spans residues 2132–2226 (RRPPSDLYLP…GNTSQPPAFF (95 aa)). 3 positions are modified to phosphoserine: serine 2161, serine 2181, and serine 2215. The CORNR box of ID2 motif lies at 2296–2300 (LEAII). The tract at residues 2343–2459 (GRSDHALTSP…HHAWDEEPKP (117 aa)) is disordered. The residue at position 2371 (serine 2371) is a Phosphoserine. Residues 2439 to 2450 (LAAGSGPLAGPH) are compositionally biased toward low complexity.

Belongs to the N-CoR nuclear receptor corepressors family. As to quaternary structure, forms a large corepressor complex that contains SIN3A/B and histone deacetylases HDAC1 and HDAC2. This complex associates with the thyroid (TR) and the retinoid acid receptors (RAR) in the absence of ligand, and may stabilize their interaction with TFIIB. Interacts directly with RARA in the absence of ligand; the interaction represses RARA activity. Interacts (isoform SMRT) with HDAC10. Interacts with MINT. Component of the N-Cor repressor complex, at least composed of NCOR1, NCOR2, HDAC3, TBL1X, TBL1R, CORO2A and GPS2. Interacts with CBFA2T3 and ATXN1L. Interacts with RARB; the interaction is weak and does not repress RARB transactivational activity. Interacts (via 1D-myo-inositol 1,4,5,6-tetrakisphosphate) with HDAC3; promoting the histone deacetylase activity of HDAC3. Interacts with HDAC7 and C1D. Interacts with NR4A2; this interaction increases in the absence of PITX3. Interacts with BCL6 (via the BTB domain), required for BCL6 transcriptional repressor activity on a subset of target genes. Forms ternary complexes with BCOR and BCL6 on target gene promoters but, on enhancer elements, interacts with BCL6 and HDAC3 to repress proximal gene expression. May interact with DEAF1. Interacts with RXRA. Interacts with MECP2. Interacts with ZBTB7A. Interacts with AR. Interacts with TBL1Y. Interacts with SANBR (via the BTB domain). In terms of tissue distribution, ubiquitous. Also widely expressed in early embryos.

It is found in the nucleus. Its function is as follows. Transcriptional corepressor that mediates the transcriptional repression activity of some nuclear receptors by promoting chromatin condensation, thus preventing access of the basal transcription. Acts by recruiting chromatin modifiers, such as histone deacetylases HDAC1, HDAC2 and HDAC3. Required to activate the histone deacetylase activity of HDAC3. Involved in the regulation BCL6-dependent of the germinal center (GC) reactions, mainly through the control of the GC B-cells proliferation and survival. Recruited by ZBTB7A to the androgen response elements/ARE on target genes, negatively regulates androgen receptor signaling and androgen-induced cell proliferation. This is Nuclear receptor corepressor 2 (Ncor2) from Mus musculus (Mouse).